The sequence spans 658 residues: MSDVRVIIQRDSEREERVVTTGTTAADLFPGERTVVAARVGGELKDLAYEVKDGEEVEPVQISSEDGLNILRHSTAHVMAQAVQELFPEAKLGIGPPVKDGFYYDFDVAKPFTPEDLKAIEKKMQEIQKRGQRFSRRVVTDEAAREELADEPYKLELIGIKGSASNDDGANVEVGSGELTIYDNLDAKTGDLCWKDLCRGPHLPTTRNIPAFKLMRNAAAYWRGSEKNPMLQRIYGTAWPSKDELKAHLDFLAEAEKRDHRKLGNELDLFSIPDQIGSGLAVFHPKGGIVRRVMEDYSRRRHEEEGYEFVYTPHATKGKLFETSGHLDWYADGMYPPMQLDEGVDYYLKPMNCPMHNLIFDARGRSYRELPLRLFEFGTVYRYEKSGVVHGLTRARGFTQDDAHIYCTREKMADELDKTLTFVLNLLRDYGLTDFYLELSTKDPEKFVGSDEVWEEATETLRQVAEKQGLPLVPDPGGAAFYGPKISVQAKDAIGRTWQMSTVQLDFNLPERFDLEYTGPDGSKQRPVMIHRALFGSIERFFAVLLEHYAGAFPAWLAPVQAVGIPIGDAHVEYLQKFAAEAKKKGLRVEVDSSSDRMQKKIRNAQKQKVPFMVIAGDEDMTAGAVSFRYRDGSQENGIPLDEAIAKIAKVVEERTQV.

Residues 1–61 (MSDVRVIIQR…KDGEEVEPVQ (61 aa)) enclose the TGS domain. A catalytic region spans residues 259–554 (DHRKLGNELD…LLEHYAGAFP (296 aa)). Positions 353, 404, and 531 each coordinate Zn(2+).

Belongs to the class-II aminoacyl-tRNA synthetase family. As to quaternary structure, homodimer. It depends on Zn(2+) as a cofactor.

It is found in the cytoplasm. It carries out the reaction tRNA(Thr) + L-threonine + ATP = L-threonyl-tRNA(Thr) + AMP + diphosphate + H(+). In terms of biological role, catalyzes the attachment of threonine to tRNA(Thr) in a two-step reaction: L-threonine is first activated by ATP to form Thr-AMP and then transferred to the acceptor end of tRNA(Thr). Also edits incorrectly charged L-seryl-tRNA(Thr). The sequence is that of Threonine--tRNA ligase from Streptomyces avermitilis (strain ATCC 31267 / DSM 46492 / JCM 5070 / NBRC 14893 / NCIMB 12804 / NRRL 8165 / MA-4680).